We begin with the raw amino-acid sequence, 504 residues long: Maturase K (504 aa).

The protein belongs to the intron maturase 2 family. MatK subfamily.

Its subcellular location is the plastid. It localises to the chloroplast. Its function is as follows. Usually encoded in the trnK tRNA gene intron. Probably assists in splicing its own and other chloroplast group II introns. The polypeptide is Maturase K (Quercus lyrata (Overcup oak)).